Reading from the N-terminus, the 259-residue chain is Deoxyribose-phosphate aldolase (259 aa).

The active-site Proton donor/acceptor is the Asp102. The active-site Schiff-base intermediate with acetaldehyde is Lys167. The active-site Proton donor/acceptor is the Lys201.

This sequence belongs to the DeoC/FbaB aldolase family. DeoC type 2 subfamily.

The protein resides in the cytoplasm. The catalysed reaction is 2-deoxy-D-ribose 5-phosphate = D-glyceraldehyde 3-phosphate + acetaldehyde. The protein operates within carbohydrate degradation; 2-deoxy-D-ribose 1-phosphate degradation; D-glyceraldehyde 3-phosphate and acetaldehyde from 2-deoxy-alpha-D-ribose 1-phosphate: step 2/2. Catalyzes a reversible aldol reaction between acetaldehyde and D-glyceraldehyde 3-phosphate to generate 2-deoxy-D-ribose 5-phosphate. The protein is Deoxyribose-phosphate aldolase of Edwardsiella ictaluri (strain 93-146).